The following is a 300-amino-acid chain: MWFNPRMSKNFRVVALIGKYQSPEVAEAVLRIAEFLRVRGLDVWIEQGTASSIGMAGQFAVASYEEIGAQADLAVVLGGDGTMLNTARRLSQHGVPLVGINQGRLGFLTDISRDEALPKLGEILEGRYTEESRAMLDAEVLRAGHRVFQTLALNDVVINKGDLGRMIEFDLSIDGEFVYTQRSDGMILATPTGSTAYALSANGPILHPNVGGIALVPLCPHALTARPVTLPDTSHIEIVLLPQHDARIHFDGQARFDARAGDRLRVTRSPDVVRLLHPQGYSYFAMLREKLHWSATPRRP.

Asp80 functions as the Proton acceptor in the catalytic mechanism. NAD(+) is bound by residues 80–81 (DG), 154–155 (ND), Arg165, Arg182, Asp184, 195–200 (TAYALS), and Gln253.

It belongs to the NAD kinase family. A divalent metal cation serves as cofactor.

The protein localises to the cytoplasm. It catalyses the reaction NAD(+) + ATP = ADP + NADP(+) + H(+). Its function is as follows. Involved in the regulation of the intracellular balance of NAD and NADP, and is a key enzyme in the biosynthesis of NADP. Catalyzes specifically the phosphorylation on 2'-hydroxyl of the adenosine moiety of NAD to yield NADP. This is NAD kinase from Aromatoleum aromaticum (strain DSM 19018 / LMG 30748 / EbN1) (Azoarcus sp. (strain EbN1)).